Here is a 46-residue protein sequence, read N- to C-terminus: Protein PsbN (46 aa).

The chain crosses the membrane as a helical span at residues Ala-7 to Tyr-27.

This sequence belongs to the PsbN family.

It localises to the cellular thylakoid membrane. May play a role in photosystem I and II biogenesis. This chain is Protein PsbN, found in Synechococcus sp. (strain CC9605).